Here is a 164-residue protein sequence, read N- to C-terminus: Putative F-box protein At1g59675 (164 aa).

One can recognise an F-box domain in the interval 9 to 56 (SQSDHVPLDLTIEILSRLPAKSVGRFRSVSKLWSANTTSQNFINSFAT).

The polypeptide is Putative F-box protein At1g59675 (Arabidopsis thaliana (Mouse-ear cress)).